Consider the following 342-residue polypeptide: Ribosomal RNA small subunit methyltransferase C (342 aa).

It belongs to the methyltransferase superfamily. RsmC family. As to quaternary structure, monomer.

The protein resides in the cytoplasm. It catalyses the reaction guanosine(1207) in 16S rRNA + S-adenosyl-L-methionine = N(2)-methylguanosine(1207) in 16S rRNA + S-adenosyl-L-homocysteine + H(+). In terms of biological role, specifically methylates the guanine in position 1207 of 16S rRNA in the 30S particle. This is Ribosomal RNA small subunit methyltransferase C from Salmonella enteritidis PT4 (strain P125109).